Reading from the N-terminus, the 314-residue chain is Melanoma-associated antigen 3 (314 aa).

The segment covering Met-1 to Gly-20 has biased composition (basic and acidic residues). The interval Met-1–Pro-99 is disordered. A compositionally biased stretch (low complexity) spans Glu-21 to Thr-44. Polar residues predominate over residues Pro-65–Ser-87. The 200-residue stretch at Leu-109–Val-308 folds into the MAGE domain.

As to quaternary structure, interacts with TRIM28. In terms of processing, ubiquitinated by the DCX(DCAF12) complex specifically recognizes the diglutamate (Glu-Glu) at the C-terminus, leading to its degradation. As to expression, expressed in many tumors of several types, such as melanoma, head and neck squamous cell carcinoma, lung carcinoma and breast carcinoma, but not in normal tissues except for testes and placenta. Never expressed in kidney tumors, Leukemias and lymphomas.

Activator of ubiquitin ligase activity of RING-type zinc finger-containing E3 ubiquitin-protein ligases that acts as a repressor of autophagy. May enhance ubiquitin ligase activity of TRIM28 and stimulate p53/TP53 ubiquitination by TRIM28. Proposed to act through recruitment and/or stabilization of the Ubl-conjugating enzyme (E2) at the E3:substrate complex. May play a role in embryonal development and tumor transformation or aspects of tumor progression. In vitro promotes cell viability in melanoma cell lines. Antigen recognized on a melanoma by autologous cytolytic T-lymphocytes. This is Melanoma-associated antigen 3 from Homo sapiens (Human).